A 341-amino-acid chain; its full sequence is MAQYKGAASEAGRAMQLMKKREREREQLEQLKQKIAEDNMVKSNIDKKFSAHYDAVEQELKSSTVGLVTLNDMKAKQEALVKEREKQLAKKEQSKELQLKLEKQKEKKRKEEQKRKIASLSFNPDEGEDEEEEEEEEEEEEEDEIEEEICLPVKKKKLGKNPDVDTSFLPDRDREEEENRLREELRQEWERKQEKIKSEEIEITFSYWDGSGHRKTVKMKKGNTIQQFLQRALEVLRKDFSELRSAGVEHLMYIKEDLIIPHHHSFYDFIVTKARGKSGPLFNFDVHDDIRLVNDATVEKDESHAGKVVLRSWYEKNKHIFPASRWEPYDPEKKWDKYTIR.

Disordered regions lie at residues 1 to 27 (MAQY…EREQ) and 80 to 147 (LVKE…EIEE). The segment covering 80–115 (LVKEREKQLAKKEQSKELQLKLEKQKEKKRKEEQKR) has biased composition (basic and acidic residues). The span at 125-147 (DEGEDEEEEEEEEEEEEEDEIEE) shows a compositional bias: acidic residues.

It belongs to the FAM50 family.

It localises to the nucleus. Functionally, probably involved in the regulation of pre-mRNA splicing. The chain is Protein FAM50A (fam50a) from Danio rerio (Zebrafish).